The chain runs to 439 residues: Microfibrillar-associated protein 1A (439 aa).

Residues 1 to 200 form a disordered region; that stretch reads MSVPSALMKQ…SEDEMEPRLK (200 aa). Ser-2 carries the N-acetylserine modification. The span at 23–34 shows a compositional bias: basic and acidic residues; the sequence is RNEKGEISMEKV. A phosphoserine mark is found at Ser-52 and Ser-53. Positions 61–70 are enriched in basic and acidic residues; the sequence is QFIKKAKEQE. A Glycyl lysine isopeptide (Lys-Gly) (interchain with G-Cter in SUMO2) cross-link involves residue Lys-67. Residues 71–81 show a composition bias toward acidic residues; sequence AEPEEQEEDSS. Ser-94, Ser-116, Ser-118, Ser-132, and Ser-133 each carry phosphoserine. 2 stretches are compositionally biased toward acidic residues: residues 112 to 122 and 131 to 144; these read VVGESDSEVEG and DSSE…DDEE. A compositionally biased stretch (basic and acidic residues) spans 145-163; sequence IERRRGMMRQRAQERKNEE. Positions 178-195 are enriched in acidic residues; it reads ESESESEYEEYTDSEDEM. Lys-249 participates in a covalent cross-link: Glycyl lysine isopeptide (Lys-Gly) (interchain with G-Cter in SUMO2). The residue at position 267 (Thr-267) is a Phosphothreonine. Lys-357 participates in a covalent cross-link: Glycyl lysine isopeptide (Lys-Gly) (interchain with G-Cter in SUMO2). The residue at position 361 (Ser-361) is a Phosphoserine. Glycyl lysine isopeptide (Lys-Gly) (interchain with G-Cter in SUMO2) cross-links involve residues Lys-371, Lys-381, Lys-415, and Lys-418. Ser-432 carries the phosphoserine modification.

Belongs to the MFAP1 family. In terms of assembly, component of the spliceosome B complex. Interacts with PRPF38A (via N-terminal interaction domain).

It is found in the nucleus. In terms of biological role, involved in pre-mRNA splicing as a component of the spliceosome. This is Microfibrillar-associated protein 1A from Mus musculus (Mouse).